A 318-amino-acid polypeptide reads, in one-letter code: tRNA uridine(34) hydroxylase (318 aa).

The Rhodanese domain maps to 123–217 (EDDDTVIIDA…YGKDPETKGE (95 aa)). Catalysis depends on Cys-177, which acts as the Cysteine persulfide intermediate.

Belongs to the TrhO family.

It catalyses the reaction uridine(34) in tRNA + AH2 + O2 = 5-hydroxyuridine(34) in tRNA + A + H2O. Functionally, catalyzes oxygen-dependent 5-hydroxyuridine (ho5U) modification at position 34 in tRNAs. The protein is tRNA uridine(34) hydroxylase of Staphylococcus aureus (strain USA300).